The sequence spans 445 residues: 6-phosphogluconate dehydrogenase, decarboxylating (445 aa).

Residues 1–4 (AVMG), 22–24 (NRS), 63–65 (VKA), and N91 contribute to the NADP(+) site. Substrate is bound by residues N91 and 117 to 119 (SGG). The active-site Proton acceptor is the K172. 175 to 176 (HN) lines the substrate pocket. E179 functions as the Proton donor in the catalytic mechanism. Substrate-binding residues include Y180, K249, R276, R434, and H440.

This sequence belongs to the 6-phosphogluconate dehydrogenase family. Homodimer.

It catalyses the reaction 6-phospho-D-gluconate + NADP(+) = D-ribulose 5-phosphate + CO2 + NADPH. The protein operates within carbohydrate degradation; pentose phosphate pathway; D-ribulose 5-phosphate from D-glucose 6-phosphate (oxidative stage): step 3/3. Functionally, catalyzes the oxidative decarboxylation of 6-phosphogluconate to ribulose 5-phosphate and CO(2), with concomitant reduction of NADP to NADPH. This Raoultella terrigena (Klebsiella terrigena) protein is 6-phosphogluconate dehydrogenase, decarboxylating (gnd).